The sequence spans 310 residues: Pantothenate kinase (310 aa).

ATP is bound at residue 95-102 (GSVAVGKS).

This sequence belongs to the prokaryotic pantothenate kinase family.

It localises to the cytoplasm. It carries out the reaction (R)-pantothenate + ATP = (R)-4'-phosphopantothenate + ADP + H(+). It participates in cofactor biosynthesis; coenzyme A biosynthesis; CoA from (R)-pantothenate: step 1/5. This chain is Pantothenate kinase, found in Rhodococcus opacus (strain B4).